Here is a 730-residue protein sequence, read N- to C-terminus: Patatin-like phospholipase domain-containing protein CIMG_04897 (730 aa).

A compositionally biased stretch (basic residues) spans 1 to 11 (MTANSSRRRLQ). The segment at 1–26 (MTANSSRRRLQMKSPRTDGDEKEEDY) is disordered. Residues 97–117 (WPFLLFVLSWIVFLGALYILT) traverse the membrane as a helical segment. Residues 281-472 (LCLSGGATLA…RTDIPLKALD (192 aa)) form the PNPLA domain. A GXSXG motif is present at residues 312–316 (GTSGG). Residue S314 is the Nucleophile of the active site. D459 (proton acceptor) is an active-site residue. The interval 667–730 (GHFREAPTSH…QGQSSGTKIG (64 aa)) is disordered. Over residues 721–730 (QGQSSGTKIG) the composition is skewed to polar residues.

This sequence belongs to the PLPL family.

It localises to the membrane. In terms of biological role, probable lipid hydrolase. The chain is Patatin-like phospholipase domain-containing protein CIMG_04897 from Coccidioides immitis (strain RS) (Valley fever fungus).